The following is a 136-amino-acid chain: Translation initiation factor 5A (136 aa).

K37 is subject to Hypusine.

This sequence belongs to the eIF-5A family.

It is found in the cytoplasm. Functionally, functions by promoting the formation of the first peptide bond. In Thermococcus gammatolerans (strain DSM 15229 / JCM 11827 / EJ3), this protein is Translation initiation factor 5A (eIF5A).